We begin with the raw amino-acid sequence, 438 residues long: Xylose isomerase (438 aa).

Active-site residues include H100 and D103. Mg(2+) contacts are provided by E231, E267, H270, D295, D306, D308, and D338.

It belongs to the xylose isomerase family. In terms of assembly, homotetramer. Mg(2+) serves as cofactor.

The protein resides in the cytoplasm. The enzyme catalyses alpha-D-xylose = alpha-D-xylulofuranose. This chain is Xylose isomerase, found in Thermoanaerobacter sp. (strain X514).